The primary structure comprises 382 residues: UDP-4-amino-4-deoxy-L-arabinose--oxoglutarate aminotransferase (382 aa).

Lysine 183 bears the N6-(pyridoxal phosphate)lysine mark.

The protein belongs to the DegT/DnrJ/EryC1 family. ArnB subfamily. Homodimer. The cofactor is pyridoxal 5'-phosphate.

The catalysed reaction is UDP-4-amino-4-deoxy-beta-L-arabinose + 2-oxoglutarate = UDP-beta-L-threo-pentopyranos-4-ulose + L-glutamate. It functions in the pathway nucleotide-sugar biosynthesis; UDP-4-deoxy-4-formamido-beta-L-arabinose biosynthesis; UDP-4-deoxy-4-formamido-beta-L-arabinose from UDP-alpha-D-glucuronate: step 2/3. Its pathway is bacterial outer membrane biogenesis; lipopolysaccharide biosynthesis. Its function is as follows. Catalyzes the conversion of UDP-4-keto-arabinose (UDP-Ara4O) to UDP-4-amino-4-deoxy-L-arabinose (UDP-L-Ara4N). The modified arabinose is attached to lipid A and is required for resistance to polymyxin and cationic antimicrobial peptides. The polypeptide is UDP-4-amino-4-deoxy-L-arabinose--oxoglutarate aminotransferase (Pseudomonas aeruginosa (strain UCBPP-PA14)).